The following is a 146-amino-acid chain: Large ribosomal subunit protein uL15 (146 aa).

The disordered stretch occupies residues 1-57 (MKLHELKPAQGSRKTRNRVGRGSSSGNGKTAGRGQKGQKARSGGNIRSGFEGGQTPL). Residues 23-35 (SSSGNGKTAGRGQ) show a composition bias toward gly residues.

It belongs to the universal ribosomal protein uL15 family. Part of the 50S ribosomal subunit.

Functionally, binds to the 23S rRNA. This chain is Large ribosomal subunit protein uL15, found in Streptococcus mutans serotype c (strain ATCC 700610 / UA159).